Here is a 230-residue protein sequence, read N- to C-terminus: Ureidoacrylate amidohydrolase RutB (230 aa).

Residue Asp24 is the Proton acceptor of the active site. Lys133 is a catalytic residue. Residue Cys166 is the Nucleophile of the active site.

Belongs to the isochorismatase family. RutB subfamily.

The enzyme catalyses (Z)-3-ureidoacrylate + H2O + H(+) = (Z)-3-aminoacrylate + NH4(+) + CO2. The catalysed reaction is (Z)-3-ureidoacrylate + H2O = (Z)-3-aminoacrylate + carbamate + H(+). It catalyses the reaction (Z)-2-methylureidoacrylate + H2O + H(+) = (Z)-2-methylaminoacrylate + NH4(+) + CO2. Hydrolyzes ureidoacrylate to form aminoacrylate and carbamate. The carbamate hydrolyzes spontaneously, thereby releasing one of the nitrogen atoms of the pyrimidine ring as ammonia and one of its carbon atoms as CO2. This Escherichia coli O81 (strain ED1a) protein is Ureidoacrylate amidohydrolase RutB.